Reading from the N-terminus, the 70-residue chain is ATP synthase subunit c (70 aa).

2 consecutive transmembrane segments (helical) span residues 4-24 (IAAA…NGLI) and 45-65 (IMFI…VIAF).

It belongs to the ATPase C chain family. In terms of assembly, F-type ATPases have 2 components, F(1) - the catalytic core - and F(0) - the membrane proton channel. F(1) has five subunits: alpha(3), beta(3), gamma(1), delta(1), epsilon(1). F(0) has three main subunits: a(1), b(2) and c(10-14). The alpha and beta chains form an alternating ring which encloses part of the gamma chain. F(1) is attached to F(0) by a central stalk formed by the gamma and epsilon chains, while a peripheral stalk is formed by the delta and b chains.

It localises to the cell membrane. In terms of biological role, f(1)F(0) ATP synthase produces ATP from ADP in the presence of a proton or sodium gradient. F-type ATPases consist of two structural domains, F(1) containing the extramembraneous catalytic core and F(0) containing the membrane proton channel, linked together by a central stalk and a peripheral stalk. During catalysis, ATP synthesis in the catalytic domain of F(1) is coupled via a rotary mechanism of the central stalk subunits to proton translocation. Functionally, key component of the F(0) channel; it plays a direct role in translocation across the membrane. A homomeric c-ring of between 10-14 subunits forms the central stalk rotor element with the F(1) delta and epsilon subunits. The polypeptide is ATP synthase subunit c (Staphylococcus aureus (strain Mu3 / ATCC 700698)).